Consider the following 417-residue polypeptide: Methylthioribose-1-phosphate isomerase (417 aa).

The active-site Proton donor is Asp-285.

Belongs to the eIF-2B alpha/beta/delta subunits family. MtnA subfamily.

Its subcellular location is the cytoplasm. The protein localises to the nucleus. The catalysed reaction is 5-(methylsulfanyl)-alpha-D-ribose 1-phosphate = 5-(methylsulfanyl)-D-ribulose 1-phosphate. Its pathway is amino-acid biosynthesis; L-methionine biosynthesis via salvage pathway; L-methionine from S-methyl-5-thio-alpha-D-ribose 1-phosphate: step 1/6. Its function is as follows. Catalyzes the interconversion of methylthioribose-1-phosphate (MTR-1-P) into methylthioribulose-1-phosphate (MTRu-1-P). The polypeptide is Methylthioribose-1-phosphate isomerase (Lachancea thermotolerans (strain ATCC 56472 / CBS 6340 / NRRL Y-8284) (Yeast)).